Here is a 583-residue protein sequence, read N- to C-terminus: MATAATTSAAAIPTGGGGRRQHPHPRRPGLRPRRLHRLRLPAQAAAAAAASSPSTSSSSSSSSTPAEGGGRLVAELVGAFNELTGRMGEGLATSSSSRLLFRALKLALPALRDGDGGRALARALAIAASLADLQMDAEVISAGILREALDAGAISMRDVKSEIGISTAHLLHESLRLKHAPSKLDVLDDESASALRKFCLSYYDIRAVILELALKLDMMRHLDCLPRYLQRIKSLEVLKIYAPLAHAVGAGNLSLELEDLSFRYLFPHSYDHIDQWLRSQETENKLLIDSYKEQLLQALKDDDELSQIVQDISIQGRYKSRFSTMKKLVKDGRKPEEVNDILALRVILEPRCDGSSLDWGPRACHRTHEIIQAMWKEVPGRTKNYVTRPKENGYQSLHVAIDVSEPGKMRPLMEIQIRTKEMHKFAVGGEASHSLYKGGLTDPGEAKRLKAIMLAAAELAAMRLRDLPASDQGDSNCTNRAFCQLDKNGDGRISIEELTEVMEDLGAGGKDAKELMHLLDANSDGSLSSDEFEAFQRQIELMRSLDDKDDRYRKILKEKLQTIDSAGLIQVYRKQLGDKLLVS.

The segment covering 1–13 (MATAATTSAAAIP) has biased composition (low complexity). The segment at 1–68 (MATAATTSAA…SSSSSTPAEG (68 aa)) is disordered. A chloroplast-targeting transit peptide spans 1–69 (MATAATTSAA…SSSSTPAEGG (69 aa)). Residues 19–39 (RRQHPHPRRPGLRPRRLHRLR) show a composition bias toward basic residues. The span at 40 to 66 (LPAQAAAAAAASSPSTSSSSSSSSTPA) shows a compositional bias: low complexity. Residues 119-219 (ALARALAIAA…LELALKLDMM (101 aa)) enclose the HD domain. 2 consecutive EF-hand domains span residues 473–508 (GDSNCTNRAFCQLDKNGDGRISIEELTEVMEDLGAG) and 510–542 (KDAKELMHLLDANSDGSLSSDEFEAFQRQIELM). 10 residues coordinate Ca(2+): D486, N488, D490, R492, E497, D520, N522, D524, S526, and E531.

This sequence belongs to the RelA/SpoT family. In terms of tissue distribution, expressed in roots and shoots.

Its subcellular location is the plastid. It is found in the chloroplast. The catalysed reaction is GTP + ATP = guanosine 3'-diphosphate 5'-triphosphate + AMP. Activated by calcium. Functionally, possesses calcium-dependent ppGpp (guanosine 3'-diphosphate 5'-diphosphate) synthetase activity in vitro and is able to functionally complement E.coli relA mutants. May be involved in a rapid plant ppGpp-mediated response to pathogens and other stresses. The polypeptide is GTP diphosphokinase CRSH1, chloroplastic (Oryza sativa subsp. japonica (Rice)).